Reading from the N-terminus, the 633-residue chain is Phosphomethylpyrimidine synthase (633 aa).

Positions 1–13 are enriched in polar residues; that stretch reads MNIRSNPDTTLPA. A disordered region spans residues 1–20; that stretch reads MNIRSNPDTTLPAVTTGPLP. Substrate is bound by residues Asn221, Met250, Tyr279, His315, 335-337, 376-379, and Glu415; these read SRG and DGLR. Residue His419 participates in Zn(2+) binding. Residue Tyr442 coordinates substrate. His483 contributes to the Zn(2+) binding site. [4Fe-4S] cluster-binding residues include Cys563, Cys566, and Cys571.

Belongs to the ThiC family. As to quaternary structure, homodimer. [4Fe-4S] cluster is required as a cofactor.

It carries out the reaction 5-amino-1-(5-phospho-beta-D-ribosyl)imidazole + S-adenosyl-L-methionine = 4-amino-2-methyl-5-(phosphooxymethyl)pyrimidine + CO + 5'-deoxyadenosine + formate + L-methionine + 3 H(+). It participates in cofactor biosynthesis; thiamine diphosphate biosynthesis. Its function is as follows. Catalyzes the synthesis of the hydroxymethylpyrimidine phosphate (HMP-P) moiety of thiamine from aminoimidazole ribotide (AIR) in a radical S-adenosyl-L-methionine (SAM)-dependent reaction. The protein is Phosphomethylpyrimidine synthase of Bradyrhizobium sp. (strain ORS 278).